Consider the following 442-residue polypeptide: Tubby-related protein 3 (442 aa).

The segment at 23 to 68 (MRQAKLDYQRLLLEKRQRKKRLEPFMVQPNPEARLRRAKPRASDEQ) is required for association with the IFT complex A (IFT-A). The disordered stretch occupies residues 101-177 (PSVSSSVVEE…TSGSATAAQP (77 aa)). A compositionally biased stretch (polar residues) spans 145–162 (GISQSACLERPNSASSQN). Over residues 163 to 175 (STDTGTSGSATAA) the composition is skewed to low complexity.

It belongs to the TUB family. Associates with the IFT complex A (IFT-A). Interacts with SIRT1. As to expression, expressed at high levels in testis, ovaries, thyroid, and spinal cord.

Its subcellular location is the nucleus. It localises to the cell membrane. It is found in the cell projection. The protein resides in the cilium. The protein localises to the cytoplasm. Its subcellular location is the secreted. Its function is as follows. Negative regulator of the Shh signaling transduction pathway: recruited to primary cilia via association with the IFT complex A (IFT-A) and is required for recruitment of G protein-coupled receptor GPR161 to cilia, a promoter of PKA-dependent basal repression machinery in Shh signaling. Binds to phosphorylated inositide (phosphoinositide) lipids. Both IFT-A- and phosphoinositide-binding properties are required to regulate ciliary G protein-coupled receptor trafficking. During adipogenesis, regulates ciliary trafficking of FFAR4 in preadipocytes. The chain is Tubby-related protein 3 from Homo sapiens (Human).